Here is a 354-residue protein sequence, read N- to C-terminus: Guanine nucleotide-binding protein G(i) subunit alpha-3 (354 aa).

Gly-2 is lipidated: N-myristoyl glycine. A lipid anchor (S-palmitoyl cysteine) is attached at Cys-3. A G-alpha domain is found at Lys-32–Tyr-354. The G1 motif stretch occupies residues Lys-35 to Thr-48. 25 residues coordinate GTP: Gly-42, Glu-43, Ser-44, Gly-45, Lys-46, Ser-47, Thr-48, Asp-150, Ser-151, Leu-175, Arg-176, Thr-177, Arg-178, Val-179, Lys-180, Thr-181, Val-201, Gly-203, Asn-269, Lys-270, Asp-272, Leu-273, Cys-325, Ala-326, and Thr-327. Mg(2+) is bound at residue Ser-47. Residues Asp-173–Thr-181 are G2 motif. Residue Thr-181 participates in Mg(2+) binding. Residues Phe-196 to Arg-205 form a G3 motif region. A G4 motif region spans residues Ile-265–Asp-272. A G5 motif region spans residues Thr-324–Thr-329.

This sequence belongs to the G-alpha family. G(i/o/t/z) subfamily. Heterotrimeric G proteins are composed of 3 units; alpha, beta and gamma. The alpha subunit contains the guanine nucleotide binding site. GTP binding causes dissociation of the heterotrimer, liberating the individual subunits so that they can interact with downstream effector proteins. Forms a complex with CCDC88A/GIV and EGFR which leads to enhanced EGFR signaling and triggering of cell migration; ligand stimulation is required for recruitment of GNAI3 to the complex. Interacts (inactive GDP-bound form) with CCDC88A/GIV (via GBA motif); the interaction leads to activation of GNAI3. Interacts (inactive GDP-bound form) with CCDC88C/DAPLE (via GBA motif); the interaction leads to activation of GNAI3. Interacts (inactive GDP-bound form) with NUCB1 (via GBA motif) and NUCB2 (via GBA motif); the interaction leads to activation of GNAI3. Interacts (inactive GDP-bound form) with PLCD4 (via GBA motif); the interaction leads to activation of GNAI3. Interacts with INSR; the interaction is probably mediated by CCDC88A/GIV. Interacts with GPSM1. Interacts (GDP-bound form) with GPSM2 (via GoLoco domains). Does not interact with RGS2. Interacts with RGS8 and RGS10; this strongly enhances the intrinsic GTPase activity. Interacts with RGS16; this strongly enhances the intrinsic GTPase activity. Interacts with RGS12. Interacts (via active GTP- or inactive GDP-bound form) with RGS14. Interacts (via active GTP-bound form) with TRPC5 (via ANK repeats) in a homotetrameric ion channel; the interaction is direct and activates the channel activity.

It localises to the cytoplasm. The protein resides in the cell membrane. The protein localises to the cytoskeleton. It is found in the microtubule organizing center. Its subcellular location is the centrosome. Heterotrimeric guanine nucleotide-binding proteins (G proteins) function as transducers downstream of G protein-coupled receptors (GPCRs) in numerous signaling cascades. The alpha chain contains the guanine nucleotide binding site and alternates between an active, GTP-bound state and an inactive, GDP-bound state. Signaling by an activated GPCR promotes GDP release and GTP binding. The alpha subunit has a low GTPase activity that converts bound GTP to GDP, thereby terminating the signal. Both GDP release and GTP hydrolysis are modulated by numerous regulatory proteins. Signaling is mediated via effector proteins, such as adenylate cyclase. Inhibits adenylate cyclase activity, leading to decreased intracellular cAMP levels. Stimulates the activity of receptor-regulated K(+) channels. The active GTP-bound form prevents the association of RGS14 with centrosomes and is required for the translocation of RGS14 from the cytoplasm to the plasma membrane. May play a role in cell division. The active GTP-bound form activates the calcium permeant TRPC5 ion channels. The polypeptide is Guanine nucleotide-binding protein G(i) subunit alpha-3 (Gnai3) (Mus musculus (Mouse)).